Consider the following 505-residue polypeptide: Flagellin (505 aa).

The protein belongs to the bacterial flagellin family.

It is found in the secreted. Its subcellular location is the bacterial flagellum. Its function is as follows. Flagellin is the subunit protein which polymerizes to form the filaments of bacterial flagella. This is Flagellin (fliC) from Salmonella rostock.